Consider the following 1166-residue polypeptide: Myosin-1 (1166 aa).

The span at 1-13 (MSQKVTPFMQSLK) shows a compositional bias: polar residues. The segment at 1-71 (MSQKVTPFMQ…AGDSEDSPYS (71 aa)) is disordered. S14 carries the post-translational modification Phosphoserine. A compositionally biased stretch (polar residues) spans 32–45 (NSSGASVRLTNSNV). One can recognise a Myosin N-terminal SH3-like domain in the interval 112 to 161 (KKILQSWIQLPNGNWELGKILSTSGEESVISLPEGKVIKVISETLVPANP). The Myosin motor domain maps to 165–837 (DGVDDLMQLS…QIGVLEDTRN (673 aa)). ATP contacts are provided by residues 256-263 (GESGAGKT) and 304-312 (NDNSSRFGK). Actin-binding stretches follow at residues 589-623 (LFEK…KQHL) and 717-739 (LFQL…KPNN). 4 consecutive IQ domains span residues 839 to 868 (TLHG…GISI), 862 to 891 (LKRG…RHKA), 888 to 917 (RHKA…ASVV), and 911 to 940 (IADA…LKSG). Residues 955–1005 (SVLSELQRRVLKAEAALREKEEENDILQQRLQQYENRWSEYETKMKSMEEI) adopt a coiled-coil conformation. The segment at 1030-1065 (ARNSDASVNASDATDWDSSSNQFRSQTSNGVGSRLQ) is disordered. Residues 1032–1060 (NSDASVNASDATDWDSSSNQFRSQTSNGV) are compositionally biased toward polar residues.

Belongs to the TRAFAC class myosin-kinesin ATPase superfamily. Myosin family. Plant myosin class VIII subfamily. Homodimer.

It localises to the cell junction. It is found in the plasmodesma. The protein resides in the cytoplasm. Its subcellular location is the cytoskeleton. The protein localises to the phragmoplast. It localises to the endosome. It is found in the endoplasmic reticulum. Its function is as follows. Myosin heavy chain that is required for the cell cycle-regulated transport of various organelles and proteins for their segregation. Functions by binding with its tail domain to receptor proteins on organelles and exerting force with its N-terminal motor domain against actin filaments, thereby transporting its cargo along polarized actin cables. Involved in endocytosis via its action in endosomal trafficking. In Arabidopsis thaliana (Mouse-ear cress), this protein is Myosin-1 (VIII-1).